The sequence spans 132 residues: Small ribosomal subunit protein uS8 (132 aa).

It belongs to the universal ribosomal protein uS8 family. Part of the 30S ribosomal subunit. Contacts proteins S5 and S12.

Functionally, one of the primary rRNA binding proteins, it binds directly to 16S rRNA central domain where it helps coordinate assembly of the platform of the 30S subunit. This chain is Small ribosomal subunit protein uS8, found in Streptococcus gordonii (strain Challis / ATCC 35105 / BCRC 15272 / CH1 / DL1 / V288).